A 183-amino-acid chain; its full sequence is NAD(P)H-quinone oxidoreductase subunit I, chloroplastic (183 aa).

2 4Fe-4S ferredoxin-type domains span residues 55–84 (GRIH…VDWK) and 95–124 (KSYS…MTEE). Residues cysteine 64, cysteine 67, cysteine 70, cysteine 74, cysteine 104, cysteine 107, cysteine 110, and cysteine 114 each contribute to the [4Fe-4S] cluster site.

Belongs to the complex I 23 kDa subunit family. As to quaternary structure, NDH is composed of at least 16 different subunits, 5 of which are encoded in the nucleus. [4Fe-4S] cluster is required as a cofactor.

The protein localises to the plastid. It localises to the chloroplast thylakoid membrane. It catalyses the reaction a plastoquinone + NADH + (n+1) H(+)(in) = a plastoquinol + NAD(+) + n H(+)(out). The enzyme catalyses a plastoquinone + NADPH + (n+1) H(+)(in) = a plastoquinol + NADP(+) + n H(+)(out). In terms of biological role, NDH shuttles electrons from NAD(P)H:plastoquinone, via FMN and iron-sulfur (Fe-S) centers, to quinones in the photosynthetic chain and possibly in a chloroplast respiratory chain. The immediate electron acceptor for the enzyme in this species is believed to be plastoquinone. Couples the redox reaction to proton translocation, and thus conserves the redox energy in a proton gradient. In Anthoceros angustus (Hornwort), this protein is NAD(P)H-quinone oxidoreductase subunit I, chloroplastic.